The primary structure comprises 354 residues: Uroporphyrinogen decarboxylase (354 aa).

Residues 27–31 (RQAGR), Asp-77, Tyr-154, Thr-209, and His-327 contribute to the substrate site.

Belongs to the uroporphyrinogen decarboxylase family. As to quaternary structure, homodimer.

Its subcellular location is the cytoplasm. It catalyses the reaction uroporphyrinogen III + 4 H(+) = coproporphyrinogen III + 4 CO2. It functions in the pathway porphyrin-containing compound metabolism; protoporphyrin-IX biosynthesis; coproporphyrinogen-III from 5-aminolevulinate: step 4/4. Catalyzes the decarboxylation of four acetate groups of uroporphyrinogen-III to yield coproporphyrinogen-III. The protein is Uroporphyrinogen decarboxylase of Pseudomonas entomophila (strain L48).